The sequence spans 406 residues: Argininosuccinate synthase (406 aa).

Residues 12–20 and A39 each bind ATP; that span reads AYSGGLDTS. The L-citrulline site is built by Y90 and S95. Position 120 (G120) interacts with ATP. Residues T122, N126, and D127 each contribute to the L-aspartate site. Residue N126 participates in L-citrulline binding. Positions 130, 179, 188, 264, and 276 each coordinate L-citrulline.

It belongs to the argininosuccinate synthase family. Type 1 subfamily. In terms of assembly, homotetramer.

It localises to the cytoplasm. The enzyme catalyses L-citrulline + L-aspartate + ATP = 2-(N(omega)-L-arginino)succinate + AMP + diphosphate + H(+). It functions in the pathway amino-acid biosynthesis; L-arginine biosynthesis; L-arginine from L-ornithine and carbamoyl phosphate: step 2/3. The protein is Argininosuccinate synthase of Geobacter sp. (strain M21).